Reading from the N-terminus, the 408-residue chain is Arginine biosynthesis bifunctional protein ArgJ (408 aa).

Residues T158, K184, T195, E281, N403, and T408 each contribute to the substrate site. The active-site Nucleophile is the T195.

The protein belongs to the ArgJ family. Heterotetramer of two alpha and two beta chains.

The protein localises to the cytoplasm. The catalysed reaction is N(2)-acetyl-L-ornithine + L-glutamate = N-acetyl-L-glutamate + L-ornithine. It catalyses the reaction L-glutamate + acetyl-CoA = N-acetyl-L-glutamate + CoA + H(+). It participates in amino-acid biosynthesis; L-arginine biosynthesis; L-ornithine and N-acetyl-L-glutamate from L-glutamate and N(2)-acetyl-L-ornithine (cyclic): step 1/1. The protein operates within amino-acid biosynthesis; L-arginine biosynthesis; N(2)-acetyl-L-ornithine from L-glutamate: step 1/4. Its function is as follows. Catalyzes two activities which are involved in the cyclic version of arginine biosynthesis: the synthesis of N-acetylglutamate from glutamate and acetyl-CoA as the acetyl donor, and of ornithine by transacetylation between N(2)-acetylornithine and glutamate. The chain is Arginine biosynthesis bifunctional protein ArgJ from Bacillus cereus (strain ATCC 14579 / DSM 31 / CCUG 7414 / JCM 2152 / NBRC 15305 / NCIMB 9373 / NCTC 2599 / NRRL B-3711).